Reading from the N-terminus, the 77-residue chain is U8-lycotoxin-Ls1s (77 aa).

Residues 1-20 (MKLIIFTGLVLFAIVSLIEA) form the signal peptide. The propeptide occupies 21–26 (QAENER).

It belongs to the neurotoxin 19 (CSTX) family. 08 (U8-Lctx) subfamily. Post-translationally, contains 4 disulfide bonds. As to expression, expressed by the venom gland.

The protein resides in the secreted. The chain is U8-lycotoxin-Ls1s from Lycosa singoriensis (Wolf spider).